A 91-amino-acid chain; its full sequence is Pre-early 3 receptor internalization and degradation alpha protein (91 aa).

At 1 to 4 (MIPR) the chain is on the cytoplasmic side. The propeptide at 1-22 (MIPRVLILLTLVALFCACSTLA) is signal peptide. Residues 5 to 25 (VLILLTLVALFCACSTLAAVA) traverse the membrane as a helical segment. Residues 26-34 (HIEVDCIPP) are Lumenal-facing. A helical transmembrane segment spans residues 35-60 (FTVYLLYGFVTLILICSLVTVVIAFI). At 61 to 91 (QFIDWVCVRIAYLRHHPQYRDRTIADLLRIL) the chain is on the cytoplasmic side.

This sequence belongs to the adenoviridae E3-RID-alpha family. In terms of assembly, homodimer with only one chain cleaved by signal peptidase. Interacts with E3 RID-beta and E3 CR1-alpha. The signal peptide is only cleaved partially by host signal peptidase. This results in two forms of the protein, one uncleaved with two transmembrane regions, and one cleaved with one transmembrane region.

It is found in the host membrane. Its subcellular location is the host endoplasmic reticulum. Prevents infected cell apoptosis induced by the host immune system. Acts by down-regulating a number of cell surface receptors in the tumor necrosis factor (TNF) receptor superfamily, namely FAS, TNFRSF10A/TRAIL receptor 1, and TNFRSF10B/TRAIL receptor 2. Down-regulation of these death receptors protects adenovirus-infected cells from apoptosis induced by the death receptor ligands Fas ligand and TRAIL. RID complex also down-regulates certain tyrosine kinase cell surface receptors, especially the epidermal growth factor receptor (EGFR). RID-mediated Fas and EGFR down-regulation occurs via endocytosis of the receptors into endosomes followed by transport to and degradation within lysosomes. The protein is Pre-early 3 receptor internalization and degradation alpha protein of Homo sapiens (Human).